The primary structure comprises 727 residues: NADH-ubiquinone oxidoreductase 75 kDa subunit, mitochondrial (727 aa).

The transit peptide at M1–T23 directs the protein to the mitochondrion. One can recognise a 2Fe-2S ferredoxin-type domain in the interval N30–K108. Positions 64, 75, and 78 each coordinate [2Fe-2S] cluster. Residue K84 is modified to N6-acetyllysine. C92 contributes to the [2Fe-2S] cluster binding site. The region spanning K108–G147 is the 4Fe-4S His(Cys)3-ligated-type domain. [4Fe-4S] cluster-binding residues include H124, C128, C131, C137, C176, C179, C182, and C226. The 4Fe-4S Mo/W bis-MGD-type domain maps to T245 to R301. 3 positions are modified to N6-acetyllysine: K467, K499, and K709.

The protein belongs to the complex I 75 kDa subunit family. In terms of assembly, core subunit of respiratory chain NADH dehydrogenase (Complex I) which is composed of 45 different subunits. This is the largest subunit of complex I and it is a component of the iron-sulfur (IP) fragment of the enzyme. Complex I associates with ubiquinol-cytochrome reductase complex (Complex III) to form supercomplexes. Interacts with MDM2 and AKAP1. The cofactor is [2Fe-2S] cluster. Requires [4Fe-4S] cluster as cofactor.

It is found in the mitochondrion inner membrane. The catalysed reaction is a ubiquinone + NADH + 5 H(+)(in) = a ubiquinol + NAD(+) + 4 H(+)(out). Core subunit of the mitochondrial membrane respiratory chain NADH dehydrogenase (Complex I) which catalyzes electron transfer from NADH through the respiratory chain, using ubiquinone as an electron acceptor. Essential for catalysing the entry and efficient transfer of electrons within complex I. Plays a key role in the assembly and stability of complex I and participates in the association of complex I with ubiquinol-cytochrome reductase complex (Complex III) to form supercomplexes. In Pongo abelii (Sumatran orangutan), this protein is NADH-ubiquinone oxidoreductase 75 kDa subunit, mitochondrial (NDUFS1).